The primary structure comprises 177 residues: Myosin regulatory light chain 2 (177 aa).

Positions 1–16 (MSRKSGSRSSSKRSKK) are enriched in basic residues. The interval 1–24 (MSRKSGSRSSSKRSKKSGGGSNVF) is disordered. IgE-binding epitope regions lie at residues 13–30 (RSKK…FTQR), 22–48 (NVFD…DKDG), 49–66 (VIGK…GRIA), 58–90 (TFDE…LLNM), 79–99 (PAPI…TGES), and 118–141 (NIDC…QEAD). In terms of domain architecture, EF-hand 1 spans 30 to 65 (RQVAEFKEGFQLMDRDKDGVIGKTDLRGTFDEIGRI). The Ca(2+) site is built by D43, D45, D47, and D54. The 36-residue stretch at 135–170 (FSSQEADDALDQMDIDDGGKIDVQGVIQMLTAGGGD) folds into the EF-hand 2 domain.

In terms of assembly, myosin is a hexamer of 2 heavy chains and 4 light chains. Expressed in tail muscle (at protein level).

The sequence is that of Myosin regulatory light chain 2 from Penaeus vannamei (Whiteleg shrimp).